Consider the following 473-residue polypeptide: Vasculin (473 aa).

Disordered stretches follow at residues 1–25 (MAQHDFAPAWLNFPTPPSSTKSSLN), 45–169 (RRHN…KSRA), and 191–342 (VGNL…QERD). The residue at position 49 (Ser49) is a Phosphoserine. At Arg87 the chain carries Omega-N-methylarginine. A compositionally biased stretch (low complexity) spans 93–107 (GSSRSRSSIFHSGKS). Over residues 119 to 133 (ETGRKEDKRERKQFE) the composition is skewed to basic and acidic residues. Composition is skewed to polar residues over residues 194-204 (LPSQPVKNGTG) and 251-286 (AFKSTAKNFSPSTNSVKECNRSNSSSPVDKLNQQPR). Phosphoserine is present on residues Ser274, Ser276, Ser322, and Ser381. Over residues 293–329 (MRTDKKSEFLKALKRDRVEEEHEDESRAGSEKDDDSF) the composition is skewed to basic and acidic residues. The interval 444–473 (GPWKNSTFKPTTENDDTETSSSDTSDDDDV) is disordered. Positions 456–473 (ENDDTETSSSDTSDDDDV) are enriched in acidic residues.

It belongs to the vasculin family. In terms of assembly, interacts with GTF2B, GTF2F2, RNA polymerase II and TBP.

The protein resides in the nucleus. Functions as a GC-rich promoter-specific transactivating transcription factor. The sequence is that of Vasculin (GPBP1) from Pongo abelii (Sumatran orangutan).